The following is a 130-amino-acid chain: Small ribosomal subunit protein uS9 (130 aa).

This sequence belongs to the universal ribosomal protein uS9 family.

The protein is Small ribosomal subunit protein uS9 of Buchnera aphidicola subsp. Acyrthosiphon pisum (strain Tuc7).